Consider the following 95-residue polypeptide: Integration host factor subunit beta (95 aa).

This sequence belongs to the bacterial histone-like protein family. In terms of assembly, heterodimer of an alpha and a beta chain.

This protein is one of the two subunits of integration host factor, a specific DNA-binding protein that functions in genetic recombination as well as in transcriptional and translational control. This is Integration host factor subunit beta from Colwellia psychrerythraea (strain 34H / ATCC BAA-681) (Vibrio psychroerythus).